Reading from the N-terminus, the 77-residue chain is Large ribosomal subunit protein uL29 (77 aa).

This sequence belongs to the universal ribosomal protein uL29 family.

This is Large ribosomal subunit protein uL29 from Methanopyrus kandleri (strain AV19 / DSM 6324 / JCM 9639 / NBRC 100938).